A 167-amino-acid chain; its full sequence is Mitochondrial inner membrane protease subunit 1 (167 aa).

Residues S40 and K83 contribute to the active site.

The protein belongs to the peptidase S26 family. IMP1 subfamily. As to quaternary structure, heterodimer of 2 subunits, IMMPL1 and IMMPL2.

It is found in the mitochondrion inner membrane. Catalyzes the removal of transit peptides required for the targeting of proteins from the mitochondrial matrix, across the inner membrane, into the inter-membrane space. This Xenopus tropicalis (Western clawed frog) protein is Mitochondrial inner membrane protease subunit 1 (immp1l).